We begin with the raw amino-acid sequence, 305 residues long: GMP synthase [glutamine-hydrolyzing] subunit B (305 aa).

Residues 2–184 form the GMPS ATP-PPase domain; that stretch reads VNIEKFIDQA…LGLPAEIQHR (183 aa). 29-35 serves as a coordination point for ATP; it reads SGGVDSS.

Heterodimer composed of a glutamine amidotransferase subunit (A) and a GMP-binding subunit (B).

The catalysed reaction is XMP + L-glutamine + ATP + H2O = GMP + L-glutamate + AMP + diphosphate + 2 H(+). The protein operates within purine metabolism; GMP biosynthesis; GMP from XMP (L-Gln route): step 1/1. In terms of biological role, catalyzes the synthesis of GMP from XMP. The polypeptide is GMP synthase [glutamine-hydrolyzing] subunit B (Methanoculleus marisnigri (strain ATCC 35101 / DSM 1498 / JR1)).